We begin with the raw amino-acid sequence, 201 residues long: Glutathione peroxidase 1 (201 aa).

2 positions are modified to phosphoserine: Ser-7 and Ser-32. Sec-47 is a catalytic residue. Sec-47 is a non-standard amino acid (selenocysteine). Lys-62, Lys-86, and Lys-112 each carry N6-acetyllysine; alternate. Lys-62, Lys-86, and Lys-112 each carry N6-succinyllysine; alternate. Position 119 is an N6-acetyllysine (Lys-119). Lys-146 carries the N6-acetyllysine; alternate modification. Position 146 is an N6-succinyllysine; alternate (Lys-146). Ser-195 carries the post-translational modification Phosphoserine.

It belongs to the glutathione peroxidase family. As to quaternary structure, homotetramer. Interacts with MIEN1. In terms of processing, during periods of oxidative stress, Sec-47 may react with a superoxide radical, irreversibly lose hydroselenide and be converted to dehydroalanine. As to expression, expressed in liver, kidney, lung, brain and heart.

It is found in the cytoplasm. The protein localises to the mitochondrion. It carries out the reaction 2 glutathione + H2O2 = glutathione disulfide + 2 H2O. It catalyses the reaction a hydroperoxy polyunsaturated fatty acid + 2 glutathione = a hydroxy polyunsaturated fatty acid + glutathione disulfide + H2O. The enzyme catalyses tert-butyl hydroperoxide + 2 glutathione = tert-butanol + glutathione disulfide + H2O. The catalysed reaction is cumene hydroperoxide + 2 glutathione = 2-phenylpropan-2-ol + glutathione disulfide + H2O. It carries out the reaction (13S)-hydroperoxy-(9Z,11E)-octadecadienoate + 2 glutathione = (13S)-hydroxy-(9Z,11E)-octadecadienoate + glutathione disulfide + H2O. It catalyses the reaction (9S)-hydroperoxy-(10E,12Z)-octadecadienoate + 2 glutathione = (9S)-hydroxy-(10E,12Z)-octadecadienoate + glutathione disulfide + H2O. The enzyme catalyses (5S)-hydroperoxy-(6E,8Z,11Z,14Z)-eicosatetraenoate + 2 glutathione = (5S)-hydroxy-(6E,8Z,11Z,14Z)-eicosatetraenoate + glutathione disulfide + H2O. The catalysed reaction is (12S)-hydroperoxy-(5Z,8Z,10E,14Z)-eicosatetraenoate + 2 glutathione = (12S)-hydroxy-(5Z,8Z,10E,14Z)-eicosatetraenoate + glutathione disulfide + H2O. It carries out the reaction (12R)-hydroperoxy-(5Z,8Z,10E,14Z)-eicosatetraenoate + 2 glutathione = (12R)-hydroxy-(5Z,8Z,10E,14Z)-eicosatetraenoate + glutathione disulfide + H2O. It catalyses the reaction (15S)-hydroperoxy-(5Z,8Z,11Z,13E)-eicosatetraenoate + 2 glutathione = (15S)-hydroxy-(5Z,8Z,11Z,13E)-eicosatetraenoate + glutathione disulfide + H2O. The enzyme catalyses (5S)-hydroperoxy-(6E,8Z,11Z,14Z,17Z)-eicosapentaenoate + 2 glutathione = (5S)-hydroxy-(6E,8Z,11Z,14Z,17Z)-eicosapentaenoate + glutathione disulfide + H2O. The catalysed reaction is (12S)-hydroperoxy-(5Z,8Z,10E,14Z,17Z)-eicosapentaenoate + 2 glutathione = (12S)-hydroxy-(5Z,8Z,10E,14Z,17Z)-eicosapentaenoate + glutathione disulfide + H2O. It carries out the reaction (15S)-hydroperoxy-(5Z,8Z,11Z,13E,17Z)-eicosapentaenoate + 2 glutathione = (15S)-hydroxy-(5Z,8Z,11Z,13E,17Z)-eicosapentaenoate + glutathione disulfide + H2O. It catalyses the reaction (15S)-hydroperoxy-(11Z,13E)-eicosadienoate + 2 glutathione = (15S)-hydroxy-(11Z,13E)-eicosadienoate + glutathione disulfide + H2O. The enzyme catalyses (17S)-hydroperoxy-(4Z,7Z,10Z,13Z,15E,19Z)-docosahexaenoate + 2 glutathione = (17S)-hydroxy-(4Z,7Z,10Z,13Z,15E,19Z)-docosahexaenoate + glutathione disulfide + H2O. Functionally, catalyzes the reduction of hydroperoxides in a glutathione-dependent manner thus regulating cellular redox homeostasis. Can reduce small soluble hydroperoxides such as H2O2, cumene hydroperoxide and tert-butyl hydroperoxide, as well as several fatty acid-derived hydroperoxides. In platelets catalyzes the reduction of 12-hydroperoxyeicosatetraenoic acid, the primary product of the arachidonate 12-lipoxygenase pathway. The sequence is that of Glutathione peroxidase 1 from Mus musculus (Mouse).